A 97-amino-acid polypeptide reads, in one-letter code: Co-chaperonin GroES (97 aa).

The protein belongs to the GroES chaperonin family. In terms of assembly, heptamer of 7 subunits arranged in a ring. Interacts with the chaperonin GroEL.

Its subcellular location is the cytoplasm. Together with the chaperonin GroEL, plays an essential role in assisting protein folding. The GroEL-GroES system forms a nano-cage that allows encapsulation of the non-native substrate proteins and provides a physical environment optimized to promote and accelerate protein folding. GroES binds to the apical surface of the GroEL ring, thereby capping the opening of the GroEL channel. This chain is Co-chaperonin GroES, found in Pseudomonas fluorescens (strain ATCC BAA-477 / NRRL B-23932 / Pf-5).